The following is a 194-amino-acid chain: MEVILLERVSRLGQMGDTVKVKDGFARNFLLPQGKALRANEANKKKFEGQRAQLEARNLERKSEASQVAEKLDGKSFIAVRSAGETGQLYGSVSTRDIAELLTAEGFSVNRNQILLNQPIKTIGLTNVAIALHPEVEVTVTLNIARTADEAERQAKGETLTTAEAIYGDDINDNARPENFFDPNAEFDGGEDNA.

The tract at residues 169–194 is disordered; sequence DDINDNARPENFFDPNAEFDGGEDNA.

This sequence belongs to the bacterial ribosomal protein bL9 family.

In terms of biological role, binds to the 23S rRNA. The polypeptide is Large ribosomal subunit protein bL9 (Mesorhizobium japonicum (strain LMG 29417 / CECT 9101 / MAFF 303099) (Mesorhizobium loti (strain MAFF 303099))).